The following is a 184-amino-acid chain: Myeloproliferative leukemia protein (184 aa).

The short motif at 26–30 (WSAWS) is the WSXWS motif element. Residues 44 to 64 (ITLVTALLLVLSLSALLGLLL) traverse the membrane as a helical segment. Residues 80-88 (LWPSLPDLH) carry the Box 1 motif motif.

This sequence belongs to the type I cytokine receptor family. Type 1 subfamily.

The protein resides in the membrane. In terms of biological role, truncated form of the receptor for thrombopoietin. In Mus musculus (Mouse), this protein is Myeloproliferative leukemia protein (V-MPL).